Reading from the N-terminus, the 185-residue chain is Large ribosomal subunit protein bL25 (185 aa).

It belongs to the bacterial ribosomal protein bL25 family. CTC subfamily. Part of the 50S ribosomal subunit; part of the 5S rRNA/L5/L18/L25 subcomplex. Contacts the 5S rRNA. Binds to the 5S rRNA independently of L5 and L18.

Its function is as follows. This is one of the proteins that binds to the 5S RNA in the ribosome where it forms part of the central protuberance. The polypeptide is Large ribosomal subunit protein bL25 (Chlamydia trachomatis serovar L2 (strain ATCC VR-902B / DSM 19102 / 434/Bu)).